We begin with the raw amino-acid sequence, 216 residues long: 3-keto-L-gulonate-6-phosphate decarboxylase UlaD (216 aa).

Aspartate 11 lines the substrate pocket. Mg(2+) is bound by residues glutamate 33 and aspartate 62. A substrate-binding site is contributed by arginine 192.

This sequence belongs to the HPS/KGPDC family. KGPDC subfamily. In terms of assembly, homodimer. Mg(2+) is required as a cofactor.

It carries out the reaction 3-dehydro-L-gulonate 6-phosphate + H(+) = L-xylulose 5-phosphate + CO2. It participates in cofactor degradation; L-ascorbate degradation; D-xylulose 5-phosphate from L-ascorbate: step 2/4. Its function is as follows. Catalyzes the decarboxylation of 3-keto-L-gulonate-6-P into L-xylulose-5-P. Is involved in the anaerobic L-ascorbate utilization. The chain is 3-keto-L-gulonate-6-phosphate decarboxylase UlaD from Escherichia coli O139:H28 (strain E24377A / ETEC).